Reading from the N-terminus, the 634-residue chain is tRNA uridine 5-carboxymethylaminomethyl modification enzyme MnmG (634 aa).

FAD is bound at residue 14 to 19; sequence GGGHAG. NAD(+) is bound at residue 279–293; sequence GPRYCPSIEDKVVRF.

Belongs to the MnmG family. Homodimer. Heterotetramer of two MnmE and two MnmG subunits. FAD serves as cofactor.

Its subcellular location is the cytoplasm. NAD-binding protein involved in the addition of a carboxymethylaminomethyl (cmnm) group at the wobble position (U34) of certain tRNAs, forming tRNA-cmnm(5)s(2)U34. The sequence is that of tRNA uridine 5-carboxymethylaminomethyl modification enzyme MnmG from Xanthomonas axonopodis pv. citri (strain 306).